The primary structure comprises 246 residues: Small ribosomal subunit protein uS2 (246 aa).

This sequence belongs to the universal ribosomal protein uS2 family.

This chain is Small ribosomal subunit protein uS2, found in Burkholderia thailandensis (strain ATCC 700388 / DSM 13276 / CCUG 48851 / CIP 106301 / E264).